Reading from the N-terminus, the 162-residue chain is MAPIAVGDVVPDGTISFFDENDQLQTASVHSLAAGKKVILFGVPGAFTPTCSMKHVPGFIEKAEELKSKGVDEIICFSVNDPFVMKAWGKTYPENKHVKFVADGSGEYTHLLGLELDLKDKGLGVRSRRFALLLDDLKVTVANVESGGEFTVSSADDILKAL.

The Thioredoxin domain maps to 4-162 (IAVGDVVPDG…SSADDILKAL (159 aa)). Catalysis depends on C51, which acts as the Cysteine sulfenic acid (-SOH) intermediate.

The protein belongs to the peroxiredoxin family. Prx5 subfamily. As to quaternary structure, monomer. Expressed in all tissues but mostly in reproductive tissues such as buds, flowers, siliques and seeds.

The protein localises to the cytoplasm. The enzyme catalyses [glutaredoxin]-dithiol + a hydroperoxide = [glutaredoxin]-disulfide + an alcohol + H2O. Reduces hydrogen peroxide and alkyl hydroperoxides with reducing equivalents provided through the thioredoxin or glutaredoxin system. May be involved in intracellular redox signaling. Its function is as follows. Thiol-specific peroxidase that catalyzes the reduction of hydrogen peroxide and organic hydroperoxides to water and alcohols, respectively. Plays a role in cell protection against oxidative stress by detoxifying peroxides and as sensor of hydrogen peroxide-mediated signaling events. The sequence is that of Peroxiredoxin-2B (PRXIIB) from Arabidopsis thaliana (Mouse-ear cress).